The chain runs to 155 residues: Ribosomal RNA large subunit methyltransferase H (155 aa).

Residues leucine 72, glycine 103, and 122–127 (FGRMVW) contribute to the S-adenosyl-L-methionine site.

This sequence belongs to the RNA methyltransferase RlmH family. As to quaternary structure, homodimer.

The protein localises to the cytoplasm. It catalyses the reaction pseudouridine(1915) in 23S rRNA + S-adenosyl-L-methionine = N(3)-methylpseudouridine(1915) in 23S rRNA + S-adenosyl-L-homocysteine + H(+). Specifically methylates the pseudouridine at position 1915 (m3Psi1915) in 23S rRNA. The chain is Ribosomal RNA large subunit methyltransferase H from Cereibacter sphaeroides (strain ATCC 17023 / DSM 158 / JCM 6121 / CCUG 31486 / LMG 2827 / NBRC 12203 / NCIMB 8253 / ATH 2.4.1.) (Rhodobacter sphaeroides).